A 428-amino-acid chain; its full sequence is Histidine--tRNA ligase (428 aa).

This sequence belongs to the class-II aminoacyl-tRNA synthetase family. Homodimer.

It is found in the cytoplasm. The enzyme catalyses tRNA(His) + L-histidine + ATP = L-histidyl-tRNA(His) + AMP + diphosphate + H(+). The protein is Histidine--tRNA ligase of Lactobacillus delbrueckii subsp. bulgaricus (strain ATCC 11842 / DSM 20081 / BCRC 10696 / JCM 1002 / NBRC 13953 / NCIMB 11778 / NCTC 12712 / WDCM 00102 / Lb 14).